The primary structure comprises 143 residues: Agaricus bisporus lectin (143 aa).

Residues Ala29, Ser48, Gly49, and Asn73 each coordinate beta-D-Gal-(1-&gt;3)-alpha-D-GalNAc. N-acetyl-beta-D-glucosamine contacts are provided by Thr82, Arg103, and Tyr114.

It belongs to the fungal fruit body lectin family. As to quaternary structure, homotetramer.

Functionally, lectin that recognizes O-linked galactose-beta-1,3-N-acetylgalactosamine, a disaccharide (Thomsen-Friedenreich antigen or T-disaccharide), present on cell surface glycoproteins. Can also bind galactose-beta-1,3-N-acetylglucosamine. Does not bind monosaccharides. Can be internalized by clathrin-coated vesicles after binding to surface glycoproteins. After internalization it inhibits nuclear import of nuclear localization signal dependent proteins. Inhibits proliferation of malignant cells without cytotoxicity for normal cells. The sequence is that of Agaricus bisporus lectin from Agaricus bisporus (White button mushroom).